The chain runs to 380 residues: 1-deoxy-D-xylulose 5-phosphate reductoisomerase (380 aa).

Residues Ser-10, Gly-11, Ser-12, Ile-13, Gly-36, Lys-37, Asn-38, and Asn-120 each contribute to the NADPH site. 1-deoxy-D-xylulose 5-phosphate is bound at residue Lys-121. Glu-122 serves as a coordination point for NADPH. Asp-146 lines the Mn(2+) pocket. Positions 147, 148, 172, and 195 each coordinate 1-deoxy-D-xylulose 5-phosphate. Glu-148 is a Mn(2+) binding site. Gly-201 serves as a coordination point for NADPH. The 1-deoxy-D-xylulose 5-phosphate site is built by Ser-208, Asn-213, Lys-214, and Glu-217. Residue Glu-217 participates in Mn(2+) binding.

Belongs to the DXR family. Mg(2+) serves as cofactor. Mn(2+) is required as a cofactor.

The catalysed reaction is 2-C-methyl-D-erythritol 4-phosphate + NADP(+) = 1-deoxy-D-xylulose 5-phosphate + NADPH + H(+). It functions in the pathway isoprenoid biosynthesis; isopentenyl diphosphate biosynthesis via DXP pathway; isopentenyl diphosphate from 1-deoxy-D-xylulose 5-phosphate: step 1/6. Catalyzes the NADPH-dependent rearrangement and reduction of 1-deoxy-D-xylulose-5-phosphate (DXP) to 2-C-methyl-D-erythritol 4-phosphate (MEP). In Bacillus cereus (strain ATCC 10987 / NRS 248), this protein is 1-deoxy-D-xylulose 5-phosphate reductoisomerase.